We begin with the raw amino-acid sequence, 1099 residues long: Zinc finger protein basonuclin-2 (1099 aa).

The tract at residues 45–66 (EEAEVDVRERETQRDREPKRAR) is disordered. The segment covering 49–66 (VDVRERETQRDREPKRAR) has biased composition (basic and acidic residues). Residue lysine 277 forms a Glycyl lysine isopeptide (Lys-Gly) (interchain with G-Cter in SUMO2) linkage. Residues 357–385 (LSTQNEYNESSESEVSPTPYKNDQTPNRN) are disordered. Residues 361–372 (NEYNESSESEVS) show a composition bias toward low complexity. Residues 375 to 385 (PYKNDQTPNRN) show a composition bias toward polar residues. Glycyl lysine isopeptide (Lys-Gly) (interchain with G-Cter in SUMO2) cross-links involve residues lysine 396, lysine 416, and lysine 421. A disordered region spans residues 397–423 (TEPACVSPIQNSAPVSDLTKTEHPKSS). Residues 441–464 (VFCNACGKTFYDKGTLKIHYNAVH) form a C2H2-type 1 zinc finger. Serine 561 is modified (phosphoserine). Disordered stretches follow at residues 622-641 (EPSADLAPKKKPRKSSMPVK) and 648-742 (DTAD…EGDE). A Glycyl lysine isopeptide (Lys-Gly) (interchain with G-Cter in SUMO2) cross-link involves residue lysine 641. A compositionally biased stretch (acidic residues) spans 648–661 (DTADEFDDEDDDPN). Composition is skewed to basic and acidic residues over residues 670–680 (MSHDNHCHSQE) and 719–742 (ERDYENESESSEPKLGEESMEGDE). The C2H2-type 2 zinc-finger motif lies at 833–856 (KICYVCKKSFKSSYSVKLHYRNVH). Residues lysine 894 and lysine 919 each participate in a glycyl lysine isopeptide (Lys-Gly) (interchain with G-Cter in SUMO2) cross-link. 2 disordered regions span residues 929 to 948 (LDVREDASSPAGTEDSHLNG) and 968 to 1008 (LQSS…KAEA). The span at 982–995 (AGSDEGILLDDIDG) shows a compositional bias: acidic residues. 2 consecutive C2H2-type zinc fingers follow at residues 1035 to 1058 (IMCNICHKMYSNKGTLRVHYKTVH) and 1063 to 1090 (HKCKVPGCNMMFSSVRSRNRHSQNPNLH). Residues 1079-1099 (SRNRHSQNPNLHKNIPFTSVD) are disordered.

As to expression, highly expressed in testis, uterus and small intestine, and weakly expressed in colon and prostate. Also expressed in skin, primary keratinocytes, immortalized keratinocytes, and HeLa and HEK293 cells. Not detected in blood, thymus, spleen or Hep-G2 cells.

The protein resides in the nucleus. In terms of biological role, probable transcription factor specific for skin keratinocytes. May play a role in the differentiation of spermatozoa and oocytes. May also play an important role in early urinary-tract development. In Homo sapiens (Human), this protein is Zinc finger protein basonuclin-2.